The chain runs to 413 residues: Probable inactive allantoicase (413 aa).

The protein belongs to the allantoicase family.

The function of this enzyme is unclear as allantoicase activity is not known to exist in mammals. The polypeptide is Probable inactive allantoicase (Rattus norvegicus (Rat)).